A 385-amino-acid polypeptide reads, in one-letter code: S-adenosylmethionine synthase (385 aa).

His-15 contacts ATP. Residue Asp-17 coordinates Mg(2+). Glu-43 serves as a coordination point for K(+). Residues Glu-56 and Gln-99 each coordinate L-methionine. Residues 99 to 109 (QSPDINKGINN) form a flexible loop region. ATP is bound by residues 164 to 166 (DAK), 230 to 231 (RF), Asp-239, 245 to 246 (RK), Ala-262, and Lys-266. Asp-239 is an L-methionine binding site. Lys-270 contributes to the L-methionine binding site.

It belongs to the AdoMet synthase family. In terms of assembly, homotetramer; dimer of dimers. Requires Mg(2+) as cofactor. K(+) is required as a cofactor.

It localises to the cytoplasm. The enzyme catalyses L-methionine + ATP + H2O = S-adenosyl-L-methionine + phosphate + diphosphate. The protein operates within amino-acid biosynthesis; S-adenosyl-L-methionine biosynthesis; S-adenosyl-L-methionine from L-methionine: step 1/1. Functionally, catalyzes the formation of S-adenosylmethionine (AdoMet) from methionine and ATP. The overall synthetic reaction is composed of two sequential steps, AdoMet formation and the subsequent tripolyphosphate hydrolysis which occurs prior to release of AdoMet from the enzyme. The chain is S-adenosylmethionine synthase from Baumannia cicadellinicola subsp. Homalodisca coagulata.